We begin with the raw amino-acid sequence, 129 residues long: Small ribosomal subunit protein uS11 (129 aa).

Belongs to the universal ribosomal protein uS11 family. In terms of assembly, part of the 30S ribosomal subunit. Interacts with proteins S7 and S18. Binds to IF-3.

Functionally, located on the platform of the 30S subunit, it bridges several disparate RNA helices of the 16S rRNA. Forms part of the Shine-Dalgarno cleft in the 70S ribosome. This chain is Small ribosomal subunit protein uS11, found in Colwellia psychrerythraea (strain 34H / ATCC BAA-681) (Vibrio psychroerythus).